The sequence spans 122 residues: Large ribosomal subunit protein uL18 (122 aa).

The protein belongs to the universal ribosomal protein uL18 family. As to quaternary structure, part of the 50S ribosomal subunit; part of the 5S rRNA/L5/L18/L25 subcomplex. Contacts the 5S and 23S rRNAs.

In terms of biological role, this is one of the proteins that bind and probably mediate the attachment of the 5S RNA into the large ribosomal subunit, where it forms part of the central protuberance. This chain is Large ribosomal subunit protein uL18, found in Syntrophotalea carbinolica (strain DSM 2380 / NBRC 103641 / GraBd1) (Pelobacter carbinolicus).